The following is an 839-amino-acid chain: V-type proton ATPase 116 kDa subunit a 1 (839 aa).

Residues 1–395 (MGELFRSEEM…DAYGIGTYRE (395 aa)) lie on the Cytoplasmic side of the membrane. Threonine 257 and threonine 367 each carry phosphothreonine. Phosphotyrosine is present on tyrosine 371. The chain crosses the membrane as a helical span at residues 396 to 414 (INPAPYTVITFPFLFAVMF). Residues 415–416 (GD) lie on the Vacuolar side of the membrane. A helical transmembrane segment spans residues 417-433 (FGHGILMTLFAVWMVLR). The Cytoplasmic portion of the chain corresponds to 434 to 448 (ESRILSQKHENEMFS). Residues 449–478 (MVFSGRYIILLMGLFSIYTGLIYNDCFSKS) form a helical membrane-spanning segment. The Vacuolar portion of the chain corresponds to 479-542 (LNIFGSSWSV…ATNKLTFLNS (64 aa)). A helical membrane pass occupies residues 543–562 (FKMKMSVILGIIHMLFGVSL). The Cytoplasmic segment spans residues 563-580 (SLFNHIYFKKPLNIYFGF). A helical transmembrane segment spans residues 581–601 (IPEIIFMSSLFGYLVILIFYK). Topologically, residues 602–646 (WTAYDAHSSRNAPSLLIHFINMFLFSYPESGNAMLYSGQKGIQCF) are vacuolar. Residues 647-666 (LIVVAMLCVPWMLLFKPLIL) form a helical membrane-spanning segment. At 667 to 726 (RHQYLRKKHLGTLNFGGIRVGNGPTEEDAEIIQHDQLSTHSEDAEEFDFGDTMVHQAIHT) the chain is on the cytoplasmic side. A helical transmembrane segment spans residues 727 to 751 (IEYCLGCISNTASYLRLWALSLAHA). Topologically, residues 752-772 (QLSEVLWTMVIHIGLHVRSLA) are vacuolar. Residues 773 to 811 (GGLGLFFIFAAFATLTVAILLIMEGLSAFLHALRLHWVE) form a helical membrane-spanning segment. Topologically, residues 812-839 (FQNKFYTGTGFKFLPFSFEHIREGKFDE) are cytoplasmic.

Belongs to the V-ATPase 116 kDa subunit family. As to quaternary structure, V-ATPase is a heteromultimeric enzyme made up of two complexes: the ATP-hydrolytic V1 complex and the proton translocation V0 complex. The V1 complex consists of three catalytic AB heterodimers that form a heterohexamer, three peripheral stalks each consisting of EG heterodimers, one central rotor including subunits D and F, and the regulatory subunits C and H. The proton translocation complex V0 consists of the proton transport subunit a, a ring of proteolipid subunits c9c'', rotary subunit d, subunits e and f, and the accessory subunits ATP6AP1/Ac45 and ATP6AP2/PRR. Interacts with SPAAR. As to expression, predominantly expressed in neurons in the cortex and in the dentate gyrus, CA1 and CA3 regions of the hippocampus (at protein level). Expressed at lower levels in astrocytes, oligodendrocytes and microglia (at protein level). In the cerebellum, present in Purkinje and granule cells (at protein level).

The protein resides in the cytoplasmic vesicle. It is found in the clathrin-coated vesicle membrane. It localises to the secretory vesicle. Its subcellular location is the synaptic vesicle membrane. The protein localises to the melanosome. Its function is as follows. Subunit of the V0 complex of vacuolar(H+)-ATPase (V-ATPase), a multisubunit enzyme composed of a peripheral complex (V1) that hydrolyzes ATP and a membrane integral complex (V0) that translocates protons. V-ATPase is responsible for the acidification of various organelles, such as lysosomes, endosomes, the trans-Golgi network, and secretory granules, including synaptic vesicles. In certain cell types, can be exported to the plasma membrane, where it is involved in the acidification of the extracellular environment. Required for assembly and activity of the vacuolar ATPase. Through its action on compartment acidification, plays an essential role in neuronal development in terms of integrity and connectivity of neurons. This is V-type proton ATPase 116 kDa subunit a 1 (Atp6v0a1) from Mus musculus (Mouse).